Here is a 733-residue protein sequence, read N- to C-terminus: Catalase-peroxidase (733 aa).

The signal sequence occupies residues 1 to 23; the sequence is MNNESKCPFAAAHGVRSPATARA. Residues 96–224 constitute a cross-link (tryptophyl-tyrosyl-methioninium (Trp-Tyr) (with M-250)); sequence WHSAGTYRTA…LAAVQMGLIY (129 aa). Histidine 97 serves as the catalytic Proton acceptor. The tryptophyl-tyrosyl-methioninium (Tyr-Met) (with W-96) cross-link spans 224–250; that stretch reads YVNPEGPDGNPDPVASGRDVRETFARM. Residue histidine 265 participates in heme b binding.

Belongs to the peroxidase family. Peroxidase/catalase subfamily. As to quaternary structure, homodimer or homotetramer. It depends on heme b as a cofactor. Post-translationally, formation of the three residue Trp-Tyr-Met cross-link is important for the catalase, but not the peroxidase activity of the enzyme.

The catalysed reaction is H2O2 + AH2 = A + 2 H2O. The enzyme catalyses 2 H2O2 = O2 + 2 H2O. Functionally, bifunctional enzyme with both catalase and broad-spectrum peroxidase activity. This chain is Catalase-peroxidase, found in Azoarcus sp. (strain BH72).